We begin with the raw amino-acid sequence, 231 residues long: Transcriptional regulatory protein KdpE (231 aa).

A Response regulatory domain is found at 4-117 (KILIIEDDHA…ELRARIRVIE (114 aa)). Position 53 is a 4-aspartylphosphate (D53). The segment at residues 127-227 (NIVFTNGLLS…HPRIGYQMLQ (101 aa)) is a DNA-binding region (ompR/PhoB-type).

Post-translationally, phosphorylated by KdpD. Phosphorylation is required for transcriptional activity.

Functionally, member of the two-component regulatory system KdpD/KdpE that regulates the transcription of a series of virulence factors through sensing external K(+) concentrations. Also regulates capsular polysaccharide synthesis. Upon phosphorylation by KpdD, functions as a transcriptional regulator by direct binding to promoter regions of target genes including spa, hla, aur and geh. Represses the transcription of kdpFABC operon. In Staphylococcus aureus (strain NCTC 8325 / PS 47), this protein is Transcriptional regulatory protein KdpE.